The sequence spans 327 residues: Leucotoxin LukDv (327 aa).

Residues 1 to 26 (MKMKKLVKSSVASSIALLLLSNTVDA) form the signal peptide.

Belongs to the aerolysin family. As to quaternary structure, toxicity requires sequential binding and synergistic association of a class S and a class F component which form heterooligomeric complexes. LukEv (class S) associates with LukDv (class F).

The protein resides in the secreted. In terms of biological role, part of a bi-component leucotoxin that acts by forming pores in the membrane of the target cells. The activity of LukEv-LukDv to rabbit leukocytes is similar to that of the Panton-Valentine leucocidin (PVL). LukEv-LukDv is hemolytic to rabbit red blood cells although the activity is only 8% of gamma-hemolysin. The protein is Leucotoxin LukDv (lukDv) of Staphylococcus aureus (strain NCTC 8325 / PS 47).